The chain runs to 308 residues: Cell division protein ZipA (308 aa).

The Periplasmic portion of the chain corresponds to 1-5 (MQELR). The chain crosses the membrane as a helical span at residues 6–26 (LVLILVGALAIAALLFHGLWT). The Cytoplasmic portion of the chain corresponds to 27-308 (SRKETSSKFG…YKQRVKVFCN (282 aa)). Positions 43–90 (FDSESEDEQPTPARGFEQPKESVVDVRQERKEPAFGRDEPNLSQDPLF) are disordered. The span at 59–82 (EQPKESVVDVRQERKEPAFGRDEP) shows a compositional bias: basic and acidic residues.

This sequence belongs to the ZipA family. In terms of assembly, interacts with FtsZ via their C-terminal domains.

The protein resides in the cell inner membrane. Functionally, essential cell division protein that stabilizes the FtsZ protofilaments by cross-linking them and that serves as a cytoplasmic membrane anchor for the Z ring. Also required for the recruitment to the septal ring of downstream cell division proteins. This is Cell division protein ZipA from Aliivibrio salmonicida (strain LFI1238) (Vibrio salmonicida (strain LFI1238)).